Here is an 856-residue protein sequence, read N- to C-terminus: Putative zinc protease C28F5.4 (856 aa).

His-71 is a binding site for Zn(2+). Glu-74 (proton acceptor) is an active-site residue. Zn(2+) contacts are provided by His-75 and Glu-152.

The protein belongs to the peptidase M16 family.

The protein is Putative zinc protease C28F5.4 of Caenorhabditis elegans.